The sequence spans 339 residues: Anthranilate phosphoribosyltransferase (339 aa).

Residues Gly-80, 83-84, Thr-88, 90-93, 108-116, and Ser-120 each bind 5-phospho-alpha-D-ribose 1-diphosphate; these read GD, NIST, and KHGNRSVSS. Anthranilate is bound at residue Gly-80. Mg(2+) is bound at residue Ser-92. Asn-111 lines the anthranilate pocket. Arg-166 serves as a coordination point for anthranilate. The Mg(2+) site is built by Asp-225 and Glu-226.

The protein belongs to the anthranilate phosphoribosyltransferase family. In terms of assembly, homodimer. The cofactor is Mg(2+).

It catalyses the reaction N-(5-phospho-beta-D-ribosyl)anthranilate + diphosphate = 5-phospho-alpha-D-ribose 1-diphosphate + anthranilate. It participates in amino-acid biosynthesis; L-tryptophan biosynthesis; L-tryptophan from chorismate: step 2/5. In terms of biological role, catalyzes the transfer of the phosphoribosyl group of 5-phosphorylribose-1-pyrophosphate (PRPP) to anthranilate to yield N-(5'-phosphoribosyl)-anthranilate (PRA). The chain is Anthranilate phosphoribosyltransferase from Desulfosudis oleivorans (strain DSM 6200 / JCM 39069 / Hxd3) (Desulfococcus oleovorans).